The following is a 1082-amino-acid chain: Protein argonaute 1A (1082 aa).

Disordered regions lie at residues 17 to 148 (MMRK…ASQD) and 187 to 208 (GQSP…VRFP). Positions 29 to 38 (GESSGTQQAT) are enriched in polar residues. A compositionally biased stretch (gly residues) spans 72 to 100 (GRGGGQHQGRGGRYQGRGGPTSHQPGGGP). The 114-residue stretch at 420–533 (PVIDFVAQLL…LPMEVCKIVE (114 aa)) folds into the PAZ domain. One can recognise a Piwi domain in the interval 709–1030 (LLIAILPDNN…AAFRARFYME (322 aa)). The segment at 1036-1065 (SGSMASGAHTRGGGPLPGARSTKPAGNVAV) is disordered.

The protein belongs to the argonaute family. Ago subfamily.

Its function is as follows. Probably involved in the RNA silencing pathway. May bind to short RNAs such as microRNAs (miRNAs) or short interfering RNAs (siRNAs), and represses the translation of mRNAs which are complementary to them. The polypeptide is Protein argonaute 1A (AGO1A) (Oryza sativa subsp. japonica (Rice)).